A 354-amino-acid polypeptide reads, in one-letter code: Long form salivary protein D7L3 (354 aa).

The signal sequence occupies residues 1-26 (MQLTPRSVHLVHLLLAATTLISPSWS).

This sequence belongs to the PBP/GOBP family.

Its subcellular location is the secreted. Functionally, modulates blood feeding of female mosquitoes on vertebrate species by binding and sequestering different mediators involved in the host response. Binds serotonin with high affinity. Binds weakly noradrenaline and histamine. Does not bind tryptamine, octopamine, dopamine, adrenaline, leukotriene C4, leukotriene D4, leukotriene B4, ADP and U-46619, a stable analog of thromboxane A2. Inhibits agonist-induced platelet aggregation. Exhibits vasodilating activity. This chain is Long form salivary protein D7L3, found in Anopheles gambiae (African malaria mosquito).